The primary structure comprises 319 residues: Cytochrome c biogenesis protein CcsA (319 aa).

7 helical membrane passes run 9–29, 44–64, 68–88, 143–163, 223–243, 257–271, and 286–306; these read ILTH…LITL, GMIV…ASSG, LSNL…LHTI, MLLS…ILII, VISL…VWAN, TWAF…IYLH, and VASI…LLGI.

The protein belongs to the CcmF/CycK/Ccl1/NrfE/CcsA family. As to quaternary structure, may interact with Ccs1.

Its subcellular location is the plastid. It is found in the chloroplast thylakoid membrane. Its function is as follows. Required during biogenesis of c-type cytochromes (cytochrome c6 and cytochrome f) at the step of heme attachment. The chain is Cytochrome c biogenesis protein CcsA from Agrostis stolonifera (Creeping bentgrass).